We begin with the raw amino-acid sequence, 489 residues long: Ketol-acid reductoisomerase (NADP(+)) (489 aa).

The region spanning 16–207 is the KARI N-terminal Rossmann domain; it reads LRKCKLVEKN…GSHRAGVLHS (192 aa). NADP(+) contacts are provided by residues 44 to 47, R67, S77, and 107 to 109; these read CGSQ and DKQ. Residue H131 is part of the active site. Residue G157 participates in NADP(+) binding. 2 KARI C-terminal knotted domains span residues 208–343 and 344–483; these read SFIA…KCKI and CHKE…MVDM. The Mg(2+) site is built by D216, E220, E388, and E392. S413 contributes to the substrate binding site.

Belongs to the ketol-acid reductoisomerase family. It depends on Mg(2+) as a cofactor.

It catalyses the reaction (2R)-2,3-dihydroxy-3-methylbutanoate + NADP(+) = (2S)-2-acetolactate + NADPH + H(+). The catalysed reaction is (2R,3R)-2,3-dihydroxy-3-methylpentanoate + NADP(+) = (S)-2-ethyl-2-hydroxy-3-oxobutanoate + NADPH + H(+). It participates in amino-acid biosynthesis; L-isoleucine biosynthesis; L-isoleucine from 2-oxobutanoate: step 2/4. Its pathway is amino-acid biosynthesis; L-valine biosynthesis; L-valine from pyruvate: step 2/4. Involved in the biosynthesis of branched-chain amino acids (BCAA). Catalyzes an alkyl-migration followed by a ketol-acid reduction of (S)-2-acetolactate (S2AL) to yield (R)-2,3-dihydroxy-isovalerate. In the isomerase reaction, S2AL is rearranged via a Mg-dependent methyl migration to produce 3-hydroxy-3-methyl-2-ketobutyrate (HMKB). In the reductase reaction, this 2-ketoacid undergoes a metal-dependent reduction by NADPH to yield (R)-2,3-dihydroxy-isovalerate. This chain is Ketol-acid reductoisomerase (NADP(+)), found in Buchnera aphidicola subsp. Schlechtendalia chinensis.